Consider the following 220-residue polypeptide: Large ribosomal subunit protein uL3 (220 aa).

A disordered region spans residues 113 to 143; it reads GTTKGHGYQGNIHKDGQRRGPMAHGSRYHRR.

Belongs to the universal ribosomal protein uL3 family. As to quaternary structure, part of the 50S ribosomal subunit. Forms a cluster with proteins L14 and L19.

Its function is as follows. One of the primary rRNA binding proteins, it binds directly near the 3'-end of the 23S rRNA, where it nucleates assembly of the 50S subunit. This chain is Large ribosomal subunit protein uL3, found in Limosilactobacillus fermentum (strain NBRC 3956 / LMG 18251) (Lactobacillus fermentum).